The chain runs to 54 residues: UPF0181 protein APJL_0874 (54 aa).

This sequence belongs to the UPF0181 family.

The chain is UPF0181 protein APJL_0874 from Actinobacillus pleuropneumoniae serotype 3 (strain JL03).